Consider the following 380-residue polypeptide: Gonadotropin-releasing hormone II receptor (380 aa).

Topologically, residues 1 to 40 (MSAVNGTPWGSSAREEVWAGSGVEVEGSELPTFSTAAKVR) are extracellular. A helical membrane pass occupies residues 41–60 (VGVTIVLFVSSAGGNLAVLW). The Cytoplasmic portion of the chain corresponds to 61–76 (SVTRPQPSQLRPSPVR). The helical transmembrane segment at 77–96 (RLFAHLAAADLLVTFVVMPL) threads the bilayer. The Extracellular portion of the chain corresponds to 97-114 (DATWNITVQWLAGDIACR). Asn101 carries N-linked (GlcNAc...) asparagine glycosylation. A disulfide bond links Cys113 and Cys188. A helical membrane pass occupies residues 115-136 (TLMFLKLMAMYAAAFLPVVIGL). At 137–160 (DRQAAVLNPLGSRSGVRKLLGAAW) the chain is on the cytoplasmic side. The helical transmembrane segment at 161–178 (GLSFLLALPQLFLFHTVH) threads the bilayer. Residues 179-204 (RAGPVPFTQCATKGSFKARWQETTYN) lie on the Extracellular side of the membrane. Residues 205-224 (LFTFCCLFLLPLTAMAICYS) traverse the membrane as a helical segment. Residues 225–278 (RIVLGVSSPRTRKGSHAPAGEFALRRSFDNRPRVRLRALRLALLVLLTFILCWT) are Cytoplasmic-facing. The chain crosses the membrane as a helical span at residues 279–297 (PYYLLGLWYWFSPSMLSEV). The Extracellular portion of the chain corresponds to 298-303 (PPSLSH). A helical transmembrane segment spans residues 304–323 (ILFLFGLLNAPLDPLLYGAF). The Cytoplasmic segment spans residues 324–380 (TLGCRRGHQELSMDSSREEGSRRMFQQDIQALRQTEVQKTVTSRKAGETKDIPITSI).

Belongs to the G-protein coupled receptor 1 family. In terms of processing, phosphorylated on the C-terminal cytoplasmic tail.

The protein localises to the cell membrane. Functionally, receptor for gonadotropin releasing hormone II (GnRH II). This receptor mediates its action by association with G proteins that activate a phosphatidylinositol-calcium second messenger system. In Callithrix jacchus (White-tufted-ear marmoset), this protein is Gonadotropin-releasing hormone II receptor (GNRHR2).